Reading from the N-terminus, the 457-residue chain is Glycerol-3-phosphate acyltransferase 3 (457 aa).

A helical membrane pass occupies residues 14–34 (WLTLVGSLILLPSAFGLSLGI). Phosphoserine occurs at positions 68 and 77. 2 helical membrane passes run 137 to 157 (ISPK…CFLL) and 161 to 181 (VTLA…VGQL). Positions 229–234 (HTSPID) match the HXXXXD motif motif. Positions 429-457 (GNGSPSLALDSSTVDNHGSPEPAFRSESL) are disordered. Positions 431-444 (GSPSLALDSSTVDN) are enriched in polar residues.

It belongs to the 1-acyl-sn-glycerol-3-phosphate acyltransferase family.

It is found in the endoplasmic reticulum membrane. The enzyme catalyses sn-glycerol 3-phosphate + an acyl-CoA = a 1-acyl-sn-glycero-3-phosphate + CoA. The catalysed reaction is a 1-acyl-sn-glycero-3-phosphate + an acyl-CoA = a 1,2-diacyl-sn-glycero-3-phosphate + CoA. It catalyses the reaction dodecanoyl-CoA + sn-glycerol 3-phosphate = 1-dodecanoyl-sn-glycerol 3-phosphate + CoA. It carries out the reaction sn-glycerol 3-phosphate + hexadecanoyl-CoA = 1-hexadecanoyl-sn-glycero-3-phosphate + CoA. The enzyme catalyses sn-glycerol 3-phosphate + (9Z)-octadecenoyl-CoA = 1-(9Z-octadecenoyl)-sn-glycero-3-phosphate + CoA. The catalysed reaction is (9Z,12Z)-octadecadienoyl-CoA + sn-glycerol 3-phosphate = 1-(9Z,12Z)-octadecadienoyl-sn-glycero-3-phosphate + CoA. It catalyses the reaction 1-tetradecanoyl-sn-glycerol 3-phosphate + (9Z)-octadecenoyl-CoA = 1-tetradecanoyl-2-(9Z)-octadecenoyl-sn-glycero-3-phosphate + CoA. It carries out the reaction 1-hexadecanoyl-sn-glycero-3-phosphate + (9Z)-octadecenoyl-CoA = 1-hexadecanoyl-2-(9Z-octadecenoyl)-sn-glycero-3-phosphate + CoA. The enzyme catalyses 1-(9Z-octadecenoyl)-sn-glycero-3-phosphate + (9Z)-octadecenoyl-CoA = 1,2-di-(9Z-octadecenoyl)-sn-glycero-3-phosphate + CoA. The catalysed reaction is 1-(6Z,9Z,12Z-octadecatrienoyl)-sn-glycero-3-phosphate + (9Z)-octadecenoyl-CoA = (6Z,9Z,12Z)-octadecatrienoyl-2-(9Z)-octadecenoyl-sn-glycero-3-phosphate + CoA. It catalyses the reaction 1-(9Z,12Z,15Z)-octadecatrienoyl-sn-glycero-3-phosphate + (9Z)-octadecenoyl-CoA = 1-(9Z,12Z,15Z)-octadecatrienoyl-2-(9Z)-octadecenoyl-sn-glycero-3-phosphate + CoA. It carries out the reaction 1-(9Z-octadecenoyl)-sn-glycero-3-phosphate + tetradecanoyl-CoA = 1-(9Z)-octadecenoyl-2-tetradecanoyl-sn-glycero-3-phosphate + CoA. The enzyme catalyses 1-(9Z-octadecenoyl)-sn-glycero-3-phosphate + hexadecanoyl-CoA = 1-(9Z)-octadecenoyl-2-hexadecanoyl-sn-glycero-3-phosphate + CoA. The catalysed reaction is 1-(9Z-octadecenoyl)-sn-glycero-3-phosphate + octadecanoyl-CoA = 1-(9Z-octadecenoyl)-2-octadecanoyl-sn-glycero-3-phosphate + CoA. It catalyses the reaction 1-(9Z-octadecenoyl)-sn-glycero-3-phosphate + (9Z,12Z)-octadecadienoyl-CoA = 1-(9Z)-octadecenoyl-2-(9Z,12Z)-octadecadienoyl-sn-glycero-3-phosphate + CoA. It carries out the reaction 1-(5Z,8Z,11Z,14Z-eicosatetraenoyl)-sn-glycero-3-phosphate + (9Z)-octadecenoyl-CoA = 1-(5Z,8Z,11Z,14Z)-eicosatetraenoyl-2-(9Z)-octadecenoyl-sn-glycero-3-phosphate + CoA. It functions in the pathway glycerolipid metabolism; triacylglycerol biosynthesis. Its pathway is phospholipid metabolism; CDP-diacylglycerol biosynthesis; CDP-diacylglycerol from sn-glycerol 3-phosphate: step 1/3. Its function is as follows. Converts glycerol-3-phosphate to 1-acyl-sn-glycerol-3-phosphate (lysophosphatidic acid or LPA) by incorporating an acyl moiety at the sn-1 position of the glycerol backbone. Also converts LPA into 1,2-diacyl-sn-glycerol-3-phosphate (phosphatidic acid or PA) by incorporating an acyl moiety at the sn-2 position of the glycerol backbone. Protects cells against lipotoxicity. The chain is Glycerol-3-phosphate acyltransferase 3 from Rattus norvegicus (Rat).